The chain runs to 321 residues: MYQLLSVASVPLLASLVHGYADPGACSGVCTTHDPGLIRRESDGTYFLFSTGNKISYVSASSIEGPWTSVGSMLPDGSSIDLDGNDDLWAPDVSYVDGLYYVYYAVSTFGSQDSAIGLATSETMEYGSWTDHGSTGIASSSAKIYNAIDPNLIYADGTYYINFGSFWDDIYQVPMKSTPTAAASSSYNLAYDPSGTHAEEGSYMFQYGDYYYLFYSAGICCGYDTSMPASGEEYHIKVCRSTSPTGDFVDSDGTACTDGGGTMVLESHGEVYGPGGQGVYDDPNLGPVLYYHYMNTTIGYADSDAQFGWNTIDFSSGWPVV.

Positions 1-19 (MYQLLSVASVPLLASLVHG) are cleaved as a signal peptide. D34 functions as the Proton acceptor in the catalytic mechanism. E200 (proton donor) is an active-site residue. An N-linked (GlcNAc...) asparagine glycan is attached at N295.

The protein belongs to the glycosyl hydrolase 43 family.

It catalyses the reaction Endohydrolysis of (1-&gt;5)-alpha-arabinofuranosidic linkages in (1-&gt;5)-arabinans.. It participates in glycan metabolism; L-arabinan degradation. In terms of biological role, its preferred substrate is linear 1,5-alpha-L-arabinan. The enzyme activity is progressively reduced as 1,5-alpha-chains become shorter or more highly substituted. The protein is Arabinan endo-1,5-alpha-L-arabinosidase A (abnA) of Aspergillus niger.